A 366-amino-acid polypeptide reads, in one-letter code: 3-dehydroquinate synthase (366 aa).

Residues 71–76, 105–109, 129–130, Lys-142, Lys-151, and 169–172 contribute to the NAD(+) site; these read DGEQYK, GVIGD, TT, and CLQT. Zn(2+)-binding residues include Glu-184, His-248, and His-265.

Belongs to the sugar phosphate cyclases superfamily. Dehydroquinate synthase family. NAD(+) is required as a cofactor. Co(2+) serves as cofactor. The cofactor is Zn(2+).

The protein localises to the cytoplasm. It carries out the reaction 7-phospho-2-dehydro-3-deoxy-D-arabino-heptonate = 3-dehydroquinate + phosphate. It functions in the pathway metabolic intermediate biosynthesis; chorismate biosynthesis; chorismate from D-erythrose 4-phosphate and phosphoenolpyruvate: step 2/7. Its function is as follows. Catalyzes the conversion of 3-deoxy-D-arabino-heptulosonate 7-phosphate (DAHP) to dehydroquinate (DHQ). This Photorhabdus laumondii subsp. laumondii (strain DSM 15139 / CIP 105565 / TT01) (Photorhabdus luminescens subsp. laumondii) protein is 3-dehydroquinate synthase.